Here is an 85-residue protein sequence, read N- to C-terminus: Toxin BmKITc (85 aa).

The first 21 residues, 1–21 (MKLFLLLVIFASMLNDGLVNA), serve as a signal peptide directing secretion. In terms of domain architecture, LCN-type CS-alpha/beta spans 22-82 (DGYIRGSDGC…KWKYESNTCG (61 aa)). 4 disulfide bridges follow: Cys-31/Cys-81, Cys-35/Cys-56, Cys-42/Cys-63, and Cys-46/Cys-65.

The protein belongs to the long (4 C-C) scorpion toxin superfamily. Sodium channel inhibitor family. Beta subfamily. Expressed by the venom gland.

It is found in the secreted. In terms of biological role, depressant insect beta-toxins cause a transient contraction paralysis followed by a slow flaccid paralysis. They bind voltage-independently at site-4 of sodium channels (Nav) and shift the voltage of activation toward more negative potentials thereby affecting sodium channel activation and promoting spontaneous and repetitive firing. The protein is Toxin BmKITc of Olivierus martensii (Manchurian scorpion).